Consider the following 157-residue polypeptide: Regenerating islet-derived protein 4 (157 aa).

An N-terminal signal peptide occupies residues 1 to 22 (MASKGVRLLLLLSWVAGPEVLS). Cys-29 and Cys-40 form a disulfide bridge. The C-type lectin domain maps to 36-154 (YRSHCYGYFR…CANRQHFLCK (119 aa)). Asn-49 and Asn-62 each carry an N-linked (GlcNAc...) asparagine glycan. Disulfide bonds link Cys-57-Cys-153 and Cys-128-Cys-145. Residues 97–102 (DPQKKQ) and 134–136 (KDK) contribute to the a carbohydrate site.

Its subcellular location is the secreted. Calcium-independent lectin displaying mannose-binding specificity and able to maintain carbohydrate recognition activity in an acidic environment. May be involved in inflammatory and metaplastic responses of the gastrointestinal epithelium. The sequence is that of Regenerating islet-derived protein 4 (Reg4) from Mus musculus (Mouse).